Reading from the N-terminus, the 297-residue chain is 33 kDa chaperonin (297 aa).

Cystine bridges form between cysteine 232–cysteine 234 and cysteine 266–cysteine 269.

It belongs to the HSP33 family. In terms of processing, under oxidizing conditions two disulfide bonds are formed involving the reactive cysteines. Under reducing conditions zinc is bound to the reactive cysteines and the protein is inactive.

It localises to the cytoplasm. Functionally, redox regulated molecular chaperone. Protects both thermally unfolding and oxidatively damaged proteins from irreversible aggregation. Plays an important role in the bacterial defense system toward oxidative stress. The chain is 33 kDa chaperonin from Pseudomonas aeruginosa (strain LESB58).